A 438-amino-acid chain; its full sequence is Glutaryl-CoA dehydrogenase, mitochondrial (438 aa).

The N-terminal 44 residues, 1 to 44, are a transit peptide targeting the mitochondrion; it reads MALRGVSVRLLSRGPGLHVLRTWVSSAAQTEKGGRTQSQLAKSS. Substrate-binding positions include 138–139 and Ser-186; that span reads RS. Residues 177–186 and 212–214 contribute to the FAD site; these read FGLTEPNSGS and WIT. At Lys-240 the chain carries N6-acetyllysine. 287-294 lines the substrate pocket; the sequence is FGCLNNAR. Residues Arg-319, Gln-330, and 387–391 contribute to the FAD site; that span reads DMLGG. Glu-414 (proton acceptor) is an active-site residue. A substrate-binding site is contributed by Gly-415. FAD contacts are provided by residues 416-418 and Phe-434; that span reads THD.

The protein belongs to the acyl-CoA dehydrogenase family. Homotetramer. Requires FAD as cofactor. As to expression, isoform Long and isoform Short are expressed in fibroblasts and liver.

The protein resides in the mitochondrion matrix. The enzyme catalyses glutaryl-CoA + oxidized [electron-transfer flavoprotein] + 2 H(+) = (2E)-butenoyl-CoA + reduced [electron-transfer flavoprotein] + CO2. The protein operates within amino-acid metabolism; lysine degradation. Its pathway is amino-acid metabolism; tryptophan metabolism. With respect to regulation, strongly inhibited by MCPA-CoA, a metabolite of hypoglycin which is present in unripened fruit of the ackee tree. Functionally, catalyzes the oxidative decarboxylation of glutaryl-CoA to crotonyl-CoA and CO(2) in the degradative pathway of L-lysine, L-hydroxylysine, and L-tryptophan metabolism. It uses electron transfer flavoprotein as its electron acceptor. Isoform Short is inactive. In Homo sapiens (Human), this protein is Glutaryl-CoA dehydrogenase, mitochondrial (GCDH).